A 561-amino-acid chain; its full sequence is Formate--tetrahydrofolate ligase (561 aa).

70–77 provides a ligand contact to ATP; it reads TPAGEGKT.

It belongs to the formate--tetrahydrofolate ligase family.

It carries out the reaction (6S)-5,6,7,8-tetrahydrofolate + formate + ATP = (6R)-10-formyltetrahydrofolate + ADP + phosphate. The protein operates within one-carbon metabolism; tetrahydrofolate interconversion. In Pelagibacter ubique (strain HTCC1062), this protein is Formate--tetrahydrofolate ligase.